Consider the following 885-residue polypeptide: DNA mismatch repair protein MutS (885 aa).

626–633 contributes to the ATP binding site; that stretch reads GPNMGGKS.

The protein belongs to the DNA mismatch repair MutS family.

Functionally, this protein is involved in the repair of mismatches in DNA. It is possible that it carries out the mismatch recognition step. This protein has a weak ATPase activity. The sequence is that of DNA mismatch repair protein MutS from Burkholderia orbicola (strain MC0-3).